Consider the following 102-residue polypeptide: UPF0473 protein SERP1179 (102 aa).

This sequence belongs to the UPF0473 family.

The polypeptide is UPF0473 protein SERP1179 (Staphylococcus epidermidis (strain ATCC 35984 / DSM 28319 / BCRC 17069 / CCUG 31568 / BM 3577 / RP62A)).